The primary structure comprises 475 residues: Rho GTPase-activating protein 15 (475 aa).

The disordered stretch occupies residues 1 to 22; sequence MERSTTSDTASEKPNPSHSTGA. Positions 80–190 constitute a PH domain; the sequence is VVEKEGYLLK…WFHAIKNAID (111 aa). In terms of domain architecture, Rho-GAP spans 281-470; it reads SHLHLVCEHE…LMLSEYSKIF (190 aa).

The protein resides in the cytoplasm. It is found in the membrane. In terms of biological role, GTPase activator for the Rho-type GTPases by converting them to an inactive GDP-bound state. The polypeptide is Rho GTPase-activating protein 15 (ARHGAP15) (Gallus gallus (Chicken)).